Reading from the N-terminus, the 43-residue chain is MANKPLQPISYPIFTFRWLAIHGLAIPTVFFFGAITAMQFIQR.

The chain crosses the membrane as a helical span at residues 18-34; that stretch reads WLAIHGLAIPTVFFFGA. Residue His-22 participates in heme binding.

It belongs to the PsbE/PsbF family. Heterodimer of an alpha subunit and a beta subunit. PSII is composed of 1 copy each of membrane proteins PsbA, PsbB, PsbC, PsbD, PsbE, PsbF, PsbH, PsbI, PsbJ, PsbK, PsbL, PsbM, PsbT, PsbY, PsbZ, Psb30/Ycf12, at least 3 peripheral proteins of the oxygen-evolving complex and a large number of cofactors. It forms dimeric complexes. Requires heme b as cofactor.

The protein localises to the plastid. It localises to the chloroplast thylakoid membrane. This b-type cytochrome is tightly associated with the reaction center of photosystem II (PSII). PSII is a light-driven water:plastoquinone oxidoreductase that uses light energy to abstract electrons from H(2)O, generating O(2) and a proton gradient subsequently used for ATP formation. It consists of a core antenna complex that captures photons, and an electron transfer chain that converts photonic excitation into a charge separation. This chain is Cytochrome b559 subunit beta, found in Cyanidium caldarium (Red alga).